Here is a 305-residue protein sequence, read N- to C-terminus: MSQPSVILATASYDHTIRFWEAETGRCYRTIQYPDSHVNRLEITPDKHYLAAACNPHIRLFDVNSNSPQPVMTYDSHTNNVMAVGFQCDAKWMYSGSEDGTVKIWDLRAPGCQKEYESVAAVNTVVLHPNQTELISGDQNGNIRVWDLRANSCSCELVPEVDTAVRSLTVMWDGTMVVAANNRGTCYVWRLLRGKQTMTEFEPLHKLQAHNGHILKCLLSPANKYLATASSDKTVKIWNVDGFKLEKVLTGHQRWVWDCVFSVDGEFLVTASSDMTARLWSMPAGKEVKVYQGHHKATVCCALHD.

WD repeat units follow at residues 1–30 (MSQP…CYRT), 33–71 (YPDS…PQPV), 76–115 (SHTN…CQKE), 117–156 (ESVA…CSCE), 160–199 (EVDT…QTMT), 209–248 (AHNG…LEKV), and 251–292 (GHQR…KVYQ).

This sequence belongs to the WD repeat LST8 family. In terms of assembly, the target of rapamycin complex 1 (TORC1) is composed of at least RAPTOR, LST8 and TOR. Interacts with TOR. In terms of tissue distribution, expressed in the root central cylinder, root tips, emerging lateral roots, vasculature of cotyledons, leaf stomata, leaf stipules, anthers, pollen, filaments, and vasculature of petals and sepals.

It localises to the endosome. Component of TORC1 complex, which is an essential cell growth regulator that controls plant development. Acts by activating transcription, protein synthesis and ribosome biogenesis, and inhibiting mRNA degradation and autophagy. Involved in regulating amino acid accumulation and the synthesis of myo-inositol and raffinose during plant adaptation to long days. Involved in the regulation of plant growth and abscisic acid (ABA) accumulation. Acts as a positive regulation of the ABA biosynthetic genes ZEP, NCED3 and AAO3, and negative regulator of the ABA catabolic genes CYP707A2 and CYP707A3. The chain is Target of rapamycin complex subunit LST8-1 from Arabidopsis thaliana (Mouse-ear cress).